We begin with the raw amino-acid sequence, 129 residues long: Replication initiation control protein YabA (129 aa).

4 residues coordinate Zn(2+): histidine 103, cysteine 105, cysteine 119, and cysteine 122.

The protein belongs to the YabA family. As to quaternary structure, homotetramer. Interacts with both DnaA and DnaN, acting as a bridge between these two proteins. It depends on Zn(2+) as a cofactor.

The protein resides in the cytoplasm. The protein localises to the nucleoid. In terms of biological role, involved in control of chromosome replication initiation. Inhibits the cooperative binding of DnaA to the oriC region, thus negatively regulating initiation of chromosome replication. Inhibits the ability of DnaA-ATP to form a helix on DNA; does not disassemble preformed DnaA-DNA helices. Decreases the residence time of DnaA on the chromosome at its binding sites (oriC, replication forks and promoter-binding sites). Tethers DnaA to the replication machinery via the DNA polymerase beta sliding clamp subunit (dnaN). Associates with oriC and other DnaA targets on the chromosome in a DnaA-dependent manner. This is Replication initiation control protein YabA from Listeria welshimeri serovar 6b (strain ATCC 35897 / DSM 20650 / CCUG 15529 / CIP 8149 / NCTC 11857 / SLCC 5334 / V8).